A 78-amino-acid polypeptide reads, in one-letter code: Conotoxin TsMSGL-11 (78 aa).

Residues 1-24 form the signal peptide; it reads MSGLGIMVLTLLLLVFMATSHQDA. Residues 25–44 constitute a propeptide that is removed on maturation; it reads GEKQATQRDAINVRRRRSIT. 3 disulfides stabilise this stretch: cysteine 51–cysteine 63, cysteine 55–cysteine 72, and cysteine 62–cysteine 76. A Phenylalanine amide modification is found at phenylalanine 77.

It belongs to the conotoxin O3 superfamily. In terms of tissue distribution, expressed by the venom duct.

It localises to the secreted. The protein is Conotoxin TsMSGL-11 of Conus tessulatus (Tessellate cone).